The sequence spans 261 residues: MTHQTHAYHMVNPSPWPLTGALSALLMTSGLTMWFHFNSMTLLMIGLTTNMLTMYQWWRDVIRESTFQGHHTPAVQKGLRYGMILFIISEVLFFTGFFWAFYHSSLAPTPELGGCWPPTGIHPLNPLEVPLLNTSVLLASGVSITWAHHSLMEGDRKHMLQALFITITLGVYFTLLQASEYYEAPFTISDGVYGSTFFVATGFHGLHVIIGSTFLIVCFFRQLKFHFTSNHHFGFEAAAWYWHFVDVVWLFLYVSIYWWGS.

The Mitochondrial matrix portion of the chain corresponds to Met-1–Pro-15. A helical transmembrane segment spans residues Trp-16–Trp-34. The Mitochondrial intermembrane segment spans residues Phe-35–Met-40. A helical membrane pass occupies residues Thr-41–Thr-66. The Mitochondrial matrix portion of the chain corresponds to Phe-67–Thr-72. Residues Pro-73–Ser-105 form a helical membrane-spanning segment. At Leu-106–Glu-128 the chain is on the mitochondrial intermembrane side. A helical membrane pass occupies residues Val-129–Met-152. The Mitochondrial matrix segment spans residues Glu-153–Asp-155. A helical transmembrane segment spans residues Arg-156–Glu-183. Residues Ala-184–Asp-190 are Mitochondrial intermembrane-facing. A helical membrane pass occupies residues Gly-191–Leu-223. Over Lys-224–His-232 the chain is Mitochondrial matrix. The chain crosses the membrane as a helical span at residues Phe-233–Ile-256. The Mitochondrial intermembrane segment spans residues Tyr-257–Ser-261.

The protein belongs to the cytochrome c oxidase subunit 3 family. As to quaternary structure, component of the cytochrome c oxidase (complex IV, CIV), a multisubunit enzyme composed of 14 subunits. The complex is composed of a catalytic core of 3 subunits MT-CO1, MT-CO2 and MT-CO3, encoded in the mitochondrial DNA, and 11 supernumerary subunits COX4I1 (or COX4I2), COX5A, COX5B, COX6A2 (or COX6A1), COX6B1 (or COX6B2), COX6C, COX7A1 (or COX7A2), COX7B, COX7C, COX8B and NDUFA4, which are encoded in the nuclear genome. The complex exists as a monomer or a dimer and forms supercomplexes (SCs) in the inner mitochondrial membrane with NADH-ubiquinone oxidoreductase (complex I, CI) and ubiquinol-cytochrome c oxidoreductase (cytochrome b-c1 complex, complex III, CIII), resulting in different assemblies (supercomplex SCI(1)III(2)IV(1) and megacomplex MCI(2)III(2)IV(2)).

The protein resides in the mitochondrion inner membrane. The enzyme catalyses 4 Fe(II)-[cytochrome c] + O2 + 8 H(+)(in) = 4 Fe(III)-[cytochrome c] + 2 H2O + 4 H(+)(out). Its function is as follows. Component of the cytochrome c oxidase, the last enzyme in the mitochondrial electron transport chain which drives oxidative phosphorylation. The respiratory chain contains 3 multisubunit complexes succinate dehydrogenase (complex II, CII), ubiquinol-cytochrome c oxidoreductase (cytochrome b-c1 complex, complex III, CIII) and cytochrome c oxidase (complex IV, CIV), that cooperate to transfer electrons derived from NADH and succinate to molecular oxygen, creating an electrochemical gradient over the inner membrane that drives transmembrane transport and the ATP synthase. Cytochrome c oxidase is the component of the respiratory chain that catalyzes the reduction of oxygen to water. Electrons originating from reduced cytochrome c in the intermembrane space (IMS) are transferred via the dinuclear copper A center (CU(A)) of subunit 2 and heme A of subunit 1 to the active site in subunit 1, a binuclear center (BNC) formed by heme A3 and copper B (CU(B)). The BNC reduces molecular oxygen to 2 water molecules using 4 electrons from cytochrome c in the IMS and 4 protons from the mitochondrial matrix. This is Cytochrome c oxidase subunit 3 (MT-CO3) from Bos taurus (Bovine).